Here is a 629-residue protein sequence, read N- to C-terminus: MHFHERFDVIVVGGGHAGTEAALAAARMGSKTLLLTHNIDTLGQMSCNPAIGGIGKGHLVKEIDALGGAMAIATDYAGIQFRTLNSSKGPAVRATRAQADRALYRQKIQNILQNQPNLRIFQQAVDDLIVENHQVVGVVTQMGLAFESPAVVLTTGTFLSGKIHIGLENYSGGRAGDPPAIALANRLRELPIRVGRLKTGTPPRIDANTIDFSQMAEQKGDSPLPVMSFMGDVSHHPKQISCWITHTNEKTHEIIRGGLDRSPMYSGVIEGIGPRYCPSIEDKIHRFADKSSHQIFIEPEGLNTNEIYPNGISTSLPFDVQLNLVRSIKGMENAEIMRPGYAIEYDYFDPRDLKNSLETKAINGLFFAGQINGTTGYEEAGAQGLLAGMNASLQVQGKEAWCPRRDEAYLGVLVDDLSTLGTKEPYRMFTSRAEYRLLLREDNADIRLTAKGRELGLVDDARWAAFSEKLESIELELQRLRGQWVHPNSPLIHALNPHLNTPISREASFEELLRRPEMDYSKLMQIEGFGPGLEDPQAAEQVQIQVKYSGYIQRQQEEINKAVRNENTGLPLTLDYKEVPGLSNEVIAKLNNHKPETIGQASRISGITPAAISILLVHLKKRGLLRKSA.

Residue 13–18 (GGGHAG) participates in FAD binding. Residue 273–287 (GPRYCPSIEDKIHRF) coordinates NAD(+).

Belongs to the MnmG family. As to quaternary structure, homodimer. Heterotetramer of two MnmE and two MnmG subunits. FAD serves as cofactor.

It is found in the cytoplasm. Functionally, NAD-binding protein involved in the addition of a carboxymethylaminomethyl (cmnm) group at the wobble position (U34) of certain tRNAs, forming tRNA-cmnm(5)s(2)U34. The chain is tRNA uridine 5-carboxymethylaminomethyl modification enzyme MnmG from Shewanella baltica (strain OS223).